The following is a 300-amino-acid chain: Acetaldehyde dehydrogenase 3 (300 aa).

Residue 11–14 coordinates NAD(+); sequence SGNI. The active-site Acyl-thioester intermediate is the Cys-126. Residues 157 to 165 and Asn-276 each bind NAD(+); that span reads SAGPGTRAN.

The protein belongs to the acetaldehyde dehydrogenase family.

The enzyme catalyses acetaldehyde + NAD(+) + CoA = acetyl-CoA + NADH + H(+). The sequence is that of Acetaldehyde dehydrogenase 3 from Rhodococcus opacus (strain B4).